The chain runs to 225 residues: Small ribosomal subunit protein uS2 (225 aa).

The protein belongs to the universal ribosomal protein uS2 family.

This chain is Small ribosomal subunit protein uS2, found in Metallosphaera sedula (strain ATCC 51363 / DSM 5348 / JCM 9185 / NBRC 15509 / TH2).